Consider the following 83-residue polypeptide: Putative membrane protein insertion efficiency factor (83 aa).

This sequence belongs to the UPF0161 family.

It localises to the cell inner membrane. In terms of biological role, could be involved in insertion of integral membrane proteins into the membrane. The protein is Putative membrane protein insertion efficiency factor of Pelagibacter ubique (strain HTCC1062).